Consider the following 616-residue polypeptide: Dihydroxy-acid dehydratase (616 aa).

D81 is a binding site for Mg(2+). A [2Fe-2S] cluster-binding site is contributed by C122. Mg(2+) is bound by residues D123 and K124. K124 bears the N6-carboxylysine mark. C195 contacts [2Fe-2S] cluster. E491 serves as a coordination point for Mg(2+). S517 functions as the Proton acceptor in the catalytic mechanism.

Belongs to the IlvD/Edd family. Homodimer. It depends on [2Fe-2S] cluster as a cofactor. Requires Mg(2+) as cofactor.

The catalysed reaction is (2R)-2,3-dihydroxy-3-methylbutanoate = 3-methyl-2-oxobutanoate + H2O. It carries out the reaction (2R,3R)-2,3-dihydroxy-3-methylpentanoate = (S)-3-methyl-2-oxopentanoate + H2O. It functions in the pathway amino-acid biosynthesis; L-isoleucine biosynthesis; L-isoleucine from 2-oxobutanoate: step 3/4. It participates in amino-acid biosynthesis; L-valine biosynthesis; L-valine from pyruvate: step 3/4. Its function is as follows. Functions in the biosynthesis of branched-chain amino acids. Catalyzes the dehydration of (2R,3R)-2,3-dihydroxy-3-methylpentanoate (2,3-dihydroxy-3-methylvalerate) into 2-oxo-3-methylpentanoate (2-oxo-3-methylvalerate) and of (2R)-2,3-dihydroxy-3-methylbutanoate (2,3-dihydroxyisovalerate) into 2-oxo-3-methylbutanoate (2-oxoisovalerate), the penultimate precursor to L-isoleucine and L-valine, respectively. The sequence is that of Dihydroxy-acid dehydratase from Escherichia coli O81 (strain ED1a).